Reading from the N-terminus, the 347-residue chain is Globoside alpha-1,3-N-acetylgalactosaminyltransferase 1 (347 aa).

Topologically, residues 1 to 5 are cytoplasmic; sequence MRCRR. Residues 6–26 form a helical; Signal-anchor for type II membrane protein membrane-spanning segment; it reads LALGLGFSLLSGIALWSLWIY. Topologically, residues 27-347 are lumenal; the sequence is METWLPFSYV…LDKATSWLRS (321 aa). An N-linked (GlcNAc...) asparagine glycan is attached at N108. Substrate contacts are provided by residues 116–121, 206–208, and 228–231; these read FAVGKY, DVD, and HPGY. Positions 206 and 208 each coordinate Mn(2+). Residue E298 is the Nucleophile of the active site.

It belongs to the glycosyltransferase 6 family. Requires Mn(2+) as cofactor.

The protein localises to the golgi apparatus membrane. The enzyme catalyses a globoside Gb4Cer (d18:1(4E)) + UDP-N-acetyl-alpha-D-galactosamine = a globoside Forssman (d18:1(4E)) + UDP + H(+). It carries out the reaction a globoside Gb4Cer + UDP-N-acetyl-alpha-D-galactosamine = a globoside IV3GalNAc-Gb4Cer + UDP + H(+). Its pathway is protein modification; protein glycosylation. In terms of biological role, catalyzes the formation of Forssman glycolipid via the addition of N-acetylgalactosamine (GalNAc) in alpha-1,3-linkage to GalNAcb-1,3Gala-1,4Galb-1,4GlcCer (Gb4Cer). Forssman glycolipid (also called Forssman antigen; FG) probably serves for adherence of some pathogens such as E.coli uropathogenic strains. This is Globoside alpha-1,3-N-acetylgalactosaminyltransferase 1 from Canis lupus familiaris (Dog).